Consider the following 47-residue polypeptide: Large ribosomal subunit protein bL33A (47 aa).

Belongs to the bacterial ribosomal protein bL33 family.

The polypeptide is Large ribosomal subunit protein bL33A (Staphylococcus aureus (strain JH1)).